Reading from the N-terminus, the 362-residue chain is Large ribosomal subunit protein uL3 (362 aa).

A disordered region spans residues 340-362; the sequence is RPPKKKPPVQRPQITYVSVESKQ. Polar residues predominate over residues 351 to 362; it reads PQITYVSVESKQ.

This sequence belongs to the universal ribosomal protein uL3 family. Part of the 50S ribosomal subunit. Forms a cluster with proteins L14 and L24e.

In terms of biological role, one of the primary rRNA binding proteins, it binds directly near the 3'-end of the 23S rRNA, where it nucleates assembly of the 50S subunit. In Pyrococcus horikoshii (strain ATCC 700860 / DSM 12428 / JCM 9974 / NBRC 100139 / OT-3), this protein is Large ribosomal subunit protein uL3.